The chain runs to 236 residues: MKTIVVCSGGLDSVSLAHKVAAEQQLIGLVSFDYGQRHRKELDFAAACAKRLGVPHEIIDITTIGKHLTGSALTDDVDVPDGHYAEETMKATVVPNRNAIMLAIAFGLAAAQKADAVAVAVHGGDHFIYPDCRPGFIDAFQQMQNQALDGYASVSLYAPFVMTSKADIVTDGARHKTPFAETWSCYKGGERHCGRCGTCVERREAFHLAGVEDPTDYEDPDFWVTATSGFSAQEVK.

Position 7–17 (7–17 (CSGGLDSVSLA)) interacts with ATP. The Zn(2+) site is built by C185, C193, C196, and C199.

This sequence belongs to the QueC family. Zn(2+) serves as cofactor.

It catalyses the reaction 7-carboxy-7-deazaguanine + NH4(+) + ATP = 7-cyano-7-deazaguanine + ADP + phosphate + H2O + H(+). The protein operates within purine metabolism; 7-cyano-7-deazaguanine biosynthesis. Catalyzes the ATP-dependent conversion of 7-carboxy-7-deazaguanine (CDG) to 7-cyano-7-deazaguanine (preQ(0)). In Rhizobium rhizogenes (strain K84 / ATCC BAA-868) (Agrobacterium radiobacter), this protein is 7-cyano-7-deazaguanine synthase.